The following is a 258-amino-acid chain: Acetylglutamate kinase (258 aa).

Substrate is bound by residues 44–45 (GG), arginine 66, and asparagine 158. ATP is bound by residues 181-186 (DVSGIL) and 209-211 (IIT).

This sequence belongs to the acetylglutamate kinase family. ArgB subfamily. As to quaternary structure, homodimer.

It is found in the cytoplasm. It catalyses the reaction N-acetyl-L-glutamate + ATP = N-acetyl-L-glutamyl 5-phosphate + ADP. Its pathway is amino-acid biosynthesis; L-arginine biosynthesis; N(2)-acetyl-L-ornithine from L-glutamate: step 2/4. In terms of biological role, catalyzes the ATP-dependent phosphorylation of N-acetyl-L-glutamate. This is Acetylglutamate kinase from Shigella flexneri.